The chain runs to 476 residues: Ribulose bisphosphate carboxylase large chain (476 aa).

Residues 1-2 constitute a propeptide that is removed on maturation; sequence MS. At Pro3 the chain carries N-acetylproline. The residue at position 14 (Lys14) is an N6,N6,N6-trimethyllysine. Residues Asn123 and Thr173 each contribute to the substrate site. The active-site Proton acceptor is the Lys175. Lys177 contributes to the substrate binding site. Mg(2+)-binding residues include Lys201, Asp203, and Glu204. Lys201 carries the post-translational modification N6-carboxylysine. His294 functions as the Proton acceptor in the catalytic mechanism. Residues Arg295, His327, and Ser379 each coordinate substrate.

The protein belongs to the RuBisCO large chain family. Type I subfamily. As to quaternary structure, heterohexadecamer of 8 large chains and 8 small chains; disulfide-linked. The disulfide link is formed within the large subunit homodimers. Mg(2+) serves as cofactor. In terms of processing, the disulfide bond which can form in the large chain dimeric partners within the hexadecamer appears to be associated with oxidative stress and protein turnover.

It is found in the plastid. The protein resides in the chloroplast. The enzyme catalyses 2 (2R)-3-phosphoglycerate + 2 H(+) = D-ribulose 1,5-bisphosphate + CO2 + H2O. The catalysed reaction is D-ribulose 1,5-bisphosphate + O2 = 2-phosphoglycolate + (2R)-3-phosphoglycerate + 2 H(+). Its function is as follows. RuBisCO catalyzes two reactions: the carboxylation of D-ribulose 1,5-bisphosphate, the primary event in carbon dioxide fixation, as well as the oxidative fragmentation of the pentose substrate in the photorespiration process. Both reactions occur simultaneously and in competition at the same active site. This chain is Ribulose bisphosphate carboxylase large chain, found in Liriodendron tulipifera (Tuliptree).